We begin with the raw amino-acid sequence, 279 residues long: NH(3)-dependent NAD(+) synthetase (279 aa).

39–46 serves as a coordination point for ATP; that stretch reads GLSGGIDS. Asp-45 contacts Mg(2+). Arg-122 lines the deamido-NAD(+) pocket. Thr-142 is a binding site for ATP. Residue Glu-147 participates in Mg(2+) binding. Deamido-NAD(+) is bound by residues Lys-155 and Asp-162. The ATP site is built by Lys-171 and Ser-193. 253–254 provides a ligand contact to deamido-NAD(+); it reads HK.

It belongs to the NAD synthetase family. As to quaternary structure, homodimer.

The enzyme catalyses deamido-NAD(+) + NH4(+) + ATP = AMP + diphosphate + NAD(+) + H(+). The protein operates within cofactor biosynthesis; NAD(+) biosynthesis; NAD(+) from deamido-NAD(+) (ammonia route): step 1/1. Its function is as follows. Catalyzes the ATP-dependent amidation of deamido-NAD to form NAD. Uses ammonia as a nitrogen source. This chain is NH(3)-dependent NAD(+) synthetase, found in Sulfolobus acidocaldarius (strain ATCC 33909 / DSM 639 / JCM 8929 / NBRC 15157 / NCIMB 11770).